The following is a 335-amino-acid chain: Epidermal differentiation-specific protein (335 aa).

Beta/gamma crystallin 'Greek key' domains follow at residues 2-42 (NTIT…KIVG), 43-81 (QPWI…RLIT), 87-126 (PQIT…RVQR), and 127-169 (GAWA…YPLR).

This sequence belongs to the beta/gamma-crystallin family. In terms of tissue distribution, epidermis specific.

The sequence is that of Epidermal differentiation-specific protein from Cynops pyrrhogaster (Japanese fire-bellied newt).